The sequence spans 408 residues: MELENICSGRVLCGNSACEKCFHKSFASHPYAKYWSENNTESPEFVNLKSASYFEFKCGECHHLFSARPCYVQNKFCPYCLDVKKICVDKNCTECYHKSFASDPLSIFWSDLNERRPRHIPKESHIRGMFNCHECGHNFETSIAVFIKYHKIRQIICPYCSEKMLCRDKNCIKCLTASFASRPEIVFWSSDNKMSPRHIFKNSKVNYIFSCTCGFKFTQSPLCIISSTKWWDRHDCKKYEYLKIECEKPQYFEDFEHYLSLVSAQKSINRIQSIPYIDVFDDIQFDQQSDIQSEPSPIFTTTKSVESADDIGTSGFTESSESTPLSDQPGCEYFEQIESVLGPDIDVDHFFSWYNETVNYNRPLKRQRQMTASEINELNDPNSVYNSPEFDHQGDQKKLTEENGCVVQ.

The segment covering 376–386 (NELNDPNSVYN) has biased composition (polar residues). The segment at 376–408 (NELNDPNSVYNSPEFDHQGDQKKLTEENGCVVQ) is disordered. Residues 389–401 (EFDHQGDQKKLTE) show a composition bias toward basic and acidic residues.

This is an uncharacterized protein from Acanthamoeba polyphaga (Amoeba).